Here is a 392-residue protein sequence, read N- to C-terminus: NAD(P)H-quinone oxidoreductase subunit H, chloroplastic (392 aa).

It belongs to the complex I 49 kDa subunit family. As to quaternary structure, NDH is composed of at least 16 different subunits, 5 of which are encoded in the nucleus.

The protein resides in the plastid. It is found in the chloroplast thylakoid membrane. The catalysed reaction is a plastoquinone + NADH + (n+1) H(+)(in) = a plastoquinol + NAD(+) + n H(+)(out). It carries out the reaction a plastoquinone + NADPH + (n+1) H(+)(in) = a plastoquinol + NADP(+) + n H(+)(out). In terms of biological role, NDH shuttles electrons from NAD(P)H:plastoquinone, via FMN and iron-sulfur (Fe-S) centers, to quinones in the photosynthetic chain and possibly in a chloroplast respiratory chain. The immediate electron acceptor for the enzyme in this species is believed to be plastoquinone. Couples the redox reaction to proton translocation, and thus conserves the redox energy in a proton gradient. The protein is NAD(P)H-quinone oxidoreductase subunit H, chloroplastic of Marchantia polymorpha (Common liverwort).